The primary structure comprises 359 residues: Membrane-bound lytic murein transglycosylase C (359 aa).

Positions 1–16 are cleaved as a signal peptide; that stretch reads MKKYLALALIAPLLIS. Residue Cys-17 is the site of N-palmitoyl cysteine attachment. Cys-17 carries S-diacylglycerol cysteine lipidation.

The protein belongs to the transglycosylase Slt family.

It is found in the cell outer membrane. The enzyme catalyses Exolytic cleavage of the (1-&gt;4)-beta-glycosidic linkage between N-acetylmuramic acid (MurNAc) and N-acetylglucosamine (GlcNAc) residues in peptidoglycan, from either the reducing or the non-reducing ends of the peptidoglycan chains, with concomitant formation of a 1,6-anhydrobond in the MurNAc residue.. Murein-degrading enzyme. May play a role in recycling of muropeptides during cell elongation and/or cell division. This is Membrane-bound lytic murein transglycosylase C from Escherichia coli (strain SE11).